The chain runs to 335 residues: Deoxyhypusine hydroxylase (335 aa).

5 HEAT-like PBS-type repeats span residues 71 to 97 (LKHELAYCLGQTRNPASLPFLQQVAKD), 104 to 130 (CRHEAAEALGALGYEDSLEILKALRDN), 200 to 233 (LRYRAMFALRDLASPPDLPTATRAVEALAKGLKD), 238 to 264 (FRHEIAFVFGQLCHPASIPSLTEALSN), and 271 to 298 (VRHEAAEALGSLGDYEGVEETLRKFLND). His73, Glu74, His106, and Glu107 together coordinate Fe cation. Fe cation contacts are provided by His240, Glu241, His273, and Glu274.

This sequence belongs to the deoxyhypusine hydroxylase family. It depends on Fe(2+) as a cofactor.

It is found in the cytoplasm. It localises to the nucleus. The enzyme catalyses [eIF5A protein]-deoxyhypusine + AH2 + O2 = [eIF5A protein]-hypusine + A + H2O. It participates in protein modification; eIF5A hypusination. Catalyzes the hydroxylation of the N(6)-(4-aminobutyl)-L-lysine intermediate to form hypusine, an essential post-translational modification only found in mature eIF-5A factor. The polypeptide is Deoxyhypusine hydroxylase (lia1) (Aspergillus fumigatus (strain ATCC MYA-4609 / CBS 101355 / FGSC A1100 / Af293) (Neosartorya fumigata)).